We begin with the raw amino-acid sequence, 209 residues long: Uracil phosphoribosyltransferase (209 aa).

5-phospho-alpha-D-ribose 1-diphosphate contacts are provided by residues Arg-79, Arg-104, and 131 to 139; that span reads DPMLATGAS. Residues Ile-194 and 199–201 each bind uracil; that span reads GDA. Asp-200 lines the 5-phospho-alpha-D-ribose 1-diphosphate pocket.

It belongs to the UPRTase family. Mg(2+) serves as cofactor.

The catalysed reaction is UMP + diphosphate = 5-phospho-alpha-D-ribose 1-diphosphate + uracil. It participates in pyrimidine metabolism; UMP biosynthesis via salvage pathway; UMP from uracil: step 1/1. Its activity is regulated as follows. Allosterically activated by GTP. Its function is as follows. Catalyzes the conversion of uracil and 5-phospho-alpha-D-ribose 1-diphosphate (PRPP) to UMP and diphosphate. This chain is Uracil phosphoribosyltransferase, found in Staphylococcus aureus (strain JH1).